The sequence spans 929 residues: Pyruvate dehydrogenase E1 component (929 aa).

Residue K375 forms an Isoglutamyl lysine isopeptide (Lys-Gln) (interchain with Q-Cter in protein Pup) linkage.

Homodimer. Part of the PDH complex, consisting of multiple copies of AceE (E1), DlaT (E2) and Lpd (E3). Mg(2+) is required as a cofactor. It depends on thiamine diphosphate as a cofactor.

The enzyme catalyses N(6)-[(R)-lipoyl]-L-lysyl-[protein] + pyruvate + H(+) = N(6)-[(R)-S(8)-acetyldihydrolipoyl]-L-lysyl-[protein] + CO2. In terms of biological role, component of the pyruvate dehydrogenase (PDH) complex, that catalyzes the overall conversion of pyruvate to acetyl-CoA and CO(2). AceE has reductase activity with pyruvate but does not react with 2-oxoglutarate. This Mycolicibacterium smegmatis (strain ATCC 700084 / mc(2)155) (Mycobacterium smegmatis) protein is Pyruvate dehydrogenase E1 component (aceE).